The chain runs to 129 residues: uncharacterized protein (129 aa).

The segment at 52–94 (NGDEESQDDWLNDLLKSDGDGGKAGPVDPSHPMETTTTDHSSQ) is disordered. Over residues 53–62 (GDEESQDDWL) the composition is skewed to acidic residues. The span at 84–94 (METTTTDHSSQ) shows a compositional bias: polar residues.

This is an uncharacterized protein from Caenorhabditis elegans.